Reading from the N-terminus, the 202-residue chain is ATP-dependent Clp protease proteolytic subunit 1 (202 aa).

Residue S99 is the Nucleophile of the active site. Residue H123 is part of the active site.

The protein belongs to the peptidase S14 family. In terms of assembly, fourteen ClpP subunits assemble into 2 heptameric rings which stack back to back to give a disk-like structure with a central cavity, resembling the structure of eukaryotic proteasomes.

The protein resides in the cytoplasm. The catalysed reaction is Hydrolysis of proteins to small peptides in the presence of ATP and magnesium. alpha-casein is the usual test substrate. In the absence of ATP, only oligopeptides shorter than five residues are hydrolyzed (such as succinyl-Leu-Tyr-|-NHMec, and Leu-Tyr-Leu-|-Tyr-Trp, in which cleavage of the -Tyr-|-Leu- and -Tyr-|-Trp bonds also occurs).. Its function is as follows. Cleaves peptides in various proteins in a process that requires ATP hydrolysis. Has a chymotrypsin-like activity. Plays a major role in the degradation of misfolded proteins. The polypeptide is ATP-dependent Clp protease proteolytic subunit 1 (Symbiobacterium thermophilum (strain DSM 24528 / JCM 14929 / IAM 14863 / T)).